The chain runs to 180 residues: Shikimate kinase (180 aa).

ATP is bound at residue 14–19; it reads GAGKSC. Ser18 contributes to the Mg(2+) binding site. Substrate is bound by residues Asp36, Arg60, and Gly82. Arg120 contributes to the ATP binding site. Residue Arg139 participates in substrate binding.

It belongs to the shikimate kinase family. Monomer. Mg(2+) is required as a cofactor.

Its subcellular location is the cytoplasm. The catalysed reaction is shikimate + ATP = 3-phosphoshikimate + ADP + H(+). It functions in the pathway metabolic intermediate biosynthesis; chorismate biosynthesis; chorismate from D-erythrose 4-phosphate and phosphoenolpyruvate: step 5/7. Its function is as follows. Catalyzes the specific phosphorylation of the 3-hydroxyl group of shikimic acid using ATP as a cosubstrate. This chain is Shikimate kinase, found in Xanthomonas euvesicatoria pv. vesicatoria (strain 85-10) (Xanthomonas campestris pv. vesicatoria).